Consider the following 417-residue polypeptide: Glucose-1-phosphate adenylyltransferase (417 aa).

Residues Tyr105, Gly170, 185–186, and Ser203 contribute to the alpha-D-glucose 1-phosphate site; that span reads EK.

Belongs to the bacterial/plant glucose-1-phosphate adenylyltransferase family. In terms of assembly, homotetramer.

It carries out the reaction alpha-D-glucose 1-phosphate + ATP + H(+) = ADP-alpha-D-glucose + diphosphate. The protein operates within glycan biosynthesis; glycogen biosynthesis. In terms of biological role, involved in the biosynthesis of ADP-glucose, a building block required for the elongation reactions to produce glycogen. Catalyzes the reaction between ATP and alpha-D-glucose 1-phosphate (G1P) to produce pyrophosphate and ADP-Glc. This is Glucose-1-phosphate adenylyltransferase from Granulibacter bethesdensis (strain ATCC BAA-1260 / CGDNIH1).